Consider the following 113-residue polypeptide: Nucleoid-associated protein RHA1_ro04210 (113 aa).

This sequence belongs to the YbaB/EbfC family. In terms of assembly, homodimer.

Its subcellular location is the cytoplasm. The protein resides in the nucleoid. In terms of biological role, binds to DNA and alters its conformation. May be involved in regulation of gene expression, nucleoid organization and DNA protection. The chain is Nucleoid-associated protein RHA1_ro04210 from Rhodococcus jostii (strain RHA1).